The following is a 519-amino-acid chain: Cytochrome P450 monooxygenase easM (519 aa).

Residues 16–33 (VAPALFASSISVLFLILS) form a helical membrane-spanning segment. Residues Asn-50 and Asn-353 are each glycosylated (N-linked (GlcNAc...) asparagine). Residue Cys-458 coordinates heme.

It belongs to the cytochrome P450 family. Heme serves as cofactor.

The protein localises to the membrane. It participates in alkaloid biosynthesis; ergot alkaloid biosynthesis. In terms of biological role, cytochrome P450 monooxygenase; part of the gene cluster that mediates the biosynthesis of fumiclavanine C, a fungal ergot alkaloid. DmaW catalyzes the first step of ergot alkaloid biosynthesis by condensing dimethylallyl diphosphate (DMAP) and tryptophan to form 4-dimethylallyl-L-tryptophan. The second step is catalyzed by the methyltransferase easF that methylates 4-dimethylallyl-L-tryptophan in the presence of S-adenosyl-L-methionine, resulting in the formation of 4-dimethylallyl-L-abrine. The catalase easC and the FAD-dependent oxidoreductase easE then transform 4-dimethylallyl-L-abrine to chanoclavine-I which is further oxidized by EasD in the presence of NAD(+), resulting in the formation of chanoclavine-I aldehyde. EasA reduces chanoclavine-I aldehyde to dihydrochanoclavine-I aldehyde that spontaneously dehydrates to form 6,8-dimethyl-6,7-didehydroergoline. EasG then catalyzes the reduction of 6,8-dimethyl-6,7-didehydroergoline to form festuclavine. Hydrolysis of festuclavine by easM then leads to the formation of fumigaclavine B which is in turn acetylated by easN to fumigaclavine A. Finally, easL catalyzes the conversion of fumigaclavine A into fumigaclavine C by attaching a dimethylallyl moiety to C-2 of the indole nucleus. In Aspergillus fumigatus (strain ATCC MYA-4609 / CBS 101355 / FGSC A1100 / Af293) (Neosartorya fumigata), this protein is Cytochrome P450 monooxygenase easM.